The chain runs to 173 residues: uncharacterized protein (173 aa).

The MSP domain occupies 16–133 (DLVLRPETIT…KHVLIRFPNK (118 aa)). The segment covering 141-163 (KKMEEDDMKQQKERNKLSNEKMG) has biased composition (basic and acidic residues). A disordered region spans residues 141-173 (KKMEEDDMKQQKERNKLSNEKMGIRNQNMGEKK).

This is an uncharacterized protein from Caenorhabditis elegans.